Consider the following 610-residue polypeptide: Terminase, large subunit (610 aa).

Residues 30-94 (RKDEDGIHWI…SRYMGLPNLK (65 aa)) are ssDNA-binding. Residues 131–301 (DYGVIKVQLR…NHFYDIWTAA (171 aa)) form an ATPase activity region. ATP contacts are provided by Gln-138 and Gln-143. Residues 161–167 (SRQLGKT) carry the Walker A motif motif. Residue Arg-202 coordinates ATP. The Walker B motif motif lies at 251 to 256 (MIYIDE). The active-site For ATPase activity is Glu-256. An ATPase coupling motif is present at residues 285 to 287 (TTT). The tract at residues 328–352 (IFDDGWQWSIQTINGSSLAQFRQEH) is binding to the portal protein. The nuclease activity stretch occupies residues 360-559 (SGTLISGMKL…FGWLSTQSKF (200 aa)). Positions 401, 458, and 542 each coordinate Mg(2+).

Belongs to the Tequatrovirus large terminase family. Interacts with the terminase small subunit; the active complex is composed of a pentamer of terminase large subunits and a dodecamer of terminase small subunits. Interacts with the portal protein. Interacts with the RNA polymerase sigma factor gp55. It depends on Mg(2+) as a cofactor. In terms of processing, phosphorylated.

Stimulated up to 50 to 100-fold by the terminase small subunit. Modestly activated by portal protein and single-stranded binding protein gp32 multimers. The terminase large subunit acts as an ATP driven molecular motor necessary for viral DNA translocation into empty capsids and as an endonuclease that cuts the viral genome to initiate and to end a packaging reaction. The terminase lies at a unique vertex of the procapsid and is composed of two subunits, a small terminase subunit involved in viral DNA recognition (packaging sequence), and a large terminase subunit possessing endonucleolytic and ATPase activities. Both terminase subunits heterooligomerize and are docked on the portal protein to form the packaging machine. The terminase large subunit exhibits endonuclease activity and cleaves the viral genome concatemer once the capsid is full (headful packaging). Once the capsid is packaged with the DNA, the terminase complex is substituted by the tail. The sequence is that of Terminase, large subunit (17) from Escherichia coli (Bacteriophage T4).